Consider the following 221-residue polypeptide: UPF0758 protein YicR (221 aa).

Residues 99–221 (ALLSPEMTRE…YVSFAERGWI (123 aa)) enclose the MPN domain. Zn(2+) contacts are provided by His170, His172, and Asp183. The JAMM motif signature appears at 170–183 (HNHPSGCAEPSKAD).

The protein belongs to the UPF0758 family. YicR subfamily.

In Salmonella paratyphi A (strain ATCC 9150 / SARB42), this protein is UPF0758 protein YicR.